The chain runs to 328 residues: tRNA uridine(34) hydroxylase (328 aa).

A Rhodanese domain is found at Leu-130–Glu-224. Catalysis depends on Cys-184, which acts as the Cysteine persulfide intermediate.

This sequence belongs to the TrhO family.

It catalyses the reaction uridine(34) in tRNA + AH2 + O2 = 5-hydroxyuridine(34) in tRNA + A + H2O. Catalyzes oxygen-dependent 5-hydroxyuridine (ho5U) modification at position 34 in tRNAs. This chain is tRNA uridine(34) hydroxylase, found in Streptococcus pyogenes serotype M6 (strain ATCC BAA-946 / MGAS10394).